The chain runs to 416 residues: S-adenosylmethionine synthase (416 aa).

His-14 is a binding site for ATP. Residue Asp-16 participates in Mg(2+) binding. Glu-42 contacts K(+). Positions 55 and 98 each coordinate L-methionine. A flexible loop region spans residues Gln-98–Thr-108. Residues Asp-173–Lys-175, Lys-249–Phe-250, Asp-258, Arg-264–Lys-265, Ala-281, and Lys-285 contribute to the ATP site. Asp-258 is a binding site for L-methionine. Position 289 (Lys-289) interacts with L-methionine.

The protein belongs to the AdoMet synthase family. In terms of assembly, homotetramer; dimer of dimers. The cofactor is Mg(2+). K(+) serves as cofactor.

The protein localises to the cytoplasm. The catalysed reaction is L-methionine + ATP + H2O = S-adenosyl-L-methionine + phosphate + diphosphate. The protein operates within amino-acid biosynthesis; S-adenosyl-L-methionine biosynthesis; S-adenosyl-L-methionine from L-methionine: step 1/1. In terms of biological role, catalyzes the formation of S-adenosylmethionine (AdoMet) from methionine and ATP. The overall synthetic reaction is composed of two sequential steps, AdoMet formation and the subsequent tripolyphosphate hydrolysis which occurs prior to release of AdoMet from the enzyme. The polypeptide is S-adenosylmethionine synthase (Thermosynechococcus vestitus (strain NIES-2133 / IAM M-273 / BP-1)).